The sequence spans 214 residues: MGNPVLIGVAGGSGSGKTTVAKELYRQFQNDSVTMIEQDSYYKDQSHLSPEERALTNYDHPFAFDNDLLLAHLQELMQGKAIQKPIYDFKVHNRKPEQIQVDPKDVIILEGMLILEDERIRNLMDIKVYVDTDADVRIARRIVRDIEERGRSLDSVVTQYLNVVRPMHLQFIEPTKRYADVIIPEGGYNRVALDLLSTKIGNILLEKQQFTNQS.

11–18 (GGSGSGKT) is a binding site for ATP.

Belongs to the uridine kinase family.

It is found in the cytoplasm. The catalysed reaction is uridine + ATP = UMP + ADP + H(+). It catalyses the reaction cytidine + ATP = CMP + ADP + H(+). Its pathway is pyrimidine metabolism; CTP biosynthesis via salvage pathway; CTP from cytidine: step 1/3. It participates in pyrimidine metabolism; UMP biosynthesis via salvage pathway; UMP from uridine: step 1/1. This chain is Uridine kinase, found in Brevibacillus brevis (strain 47 / JCM 6285 / NBRC 100599).